The sequence spans 779 residues: MAATAELQGKYQKLAQEYSKLRAQNQVLKKGVVDEQANSASLKEQLKMKDQSLRKLQQEMDSLTFRNQQLAKRVELLQDELSLSETRGKKNKKSAESSSQLSQEQKSVFNEDLQKKIEENERLHILYFEADEQHKRLEAELRTKLEVLESDAAQHQAVVDSLTRKYTDTIEKLQNDKSKLEIKSQTLEREAKDCRLRTEECQQQLKNLQAALGSRLEESLCIINEKVPFNDTRSNRYNALNVPLHNRRYQLKLRDLAGQALSFVQEIVTALLNFHTYTEQKAQIFPIDSATDTISPLNQKFSQYLHENAFYVRPLEEGMLQLFESITEDTVTVLETAVKLKAFSEHLASYLCFLRKILPYQLKSLEEECESSLCTAALKARNMELHRDMKRLTAIFEKLHTYVSLLALPSTKPEGLLRTNYSLVFTNIAASLHGSHDILKDISKHYSQKATLEQDVPTATQKLVTTNDCILSSILSLTNGVGKIASFFSNNLDHFTSSLSYGPKGGTEFISPLSAECMLQYKKKAVAYMKSLKKPCADSVPYEEALANRRVLLSSTESREGLAQQVQQSLEKIAKLEQEKEHWMLEAQLAKIKLEKENQKLKNSLSGHLAETVQERSVLSNTAEQKEETTEKSQREPIKTTSLIGMLTITTDNEKVPDVESREDLIKKHYMARIAELTSHLQLADSKSVHFHAECRALAKRLSLAEKSKESLTEELKLASQSISRLQDELMTTKRSYEDQLSMMSDHLCSMNETLTKQREEIDTLKMTSKGNSKKNKTR.

Coiled coils occupy residues 2–212 and 556–614; these read AATA…QAAL and TESR…ETVQ. 2 disordered regions span residues 85 to 105 and 612 to 637; these read ETRG…SQEQ and TVQE…QREP. Over residues 96 to 105 the composition is skewed to low complexity; sequence ESSSQLSQEQ. The span at 624–637 shows a compositional bias: basic and acidic residues; sequence EQKEETTEKSQREP. A coiled-coil region spans residues 693–739; that stretch reads AECRALAKRLSLAEKSKESLTEELKLASQSISRLQDELMTTKRSYED. The segment at 760 to 779 is disordered; sequence EEIDTLKMTSKGNSKKNKTR.

As to quaternary structure, component of the FERRY complex.

It is found in the early endosome. Component of the FERRY complex (Five-subunit Endosomal Rab5 and RNA/ribosome intermediary). The FERRY complex directly interacts with mRNAs and RAB5A, and functions as a RAB5A effector involved in the localization and the distribution of specific mRNAs most likely by mediating their endosomal transport. The complex recruits mRNAs and ribosomes to early endosomes through direct mRNA-interaction. Putative regulator of protein phosphatase 1 (PP1) activity. May play a role in the endosomal sorting process or in endosome maturation pathway. The protein is Protein phosphatase 1 regulatory subunit 21 (PPP1R21) of Gallus gallus (Chicken).